Here is a 377-residue protein sequence, read N- to C-terminus: Dihydroorotate dehydrogenase (quinone) (377 aa).

Residues 82-86 (AGFDK) and Thr-106 each bind FMN. Lys-86 contacts substrate. 131–135 (NRMGF) is a binding site for substrate. Residues Asn-159 and Asn-192 each contribute to the FMN site. Asn-192 provides a ligand contact to substrate. The active-site Nucleophile is the Ser-195. Position 197 (Asn-197) interacts with substrate. Residues Lys-228 and Thr-256 each coordinate FMN. Residue 257 to 258 (NT) coordinates substrate. FMN contacts are provided by residues Gly-282, Gly-311, and 332–333 (YT).

This sequence belongs to the dihydroorotate dehydrogenase family. Type 2 subfamily. Monomer. It depends on FMN as a cofactor.

Its subcellular location is the cell membrane. The catalysed reaction is (S)-dihydroorotate + a quinone = orotate + a quinol. The protein operates within pyrimidine metabolism; UMP biosynthesis via de novo pathway; orotate from (S)-dihydroorotate (quinone route): step 1/1. In terms of biological role, catalyzes the conversion of dihydroorotate to orotate with quinone as electron acceptor. The protein is Dihydroorotate dehydrogenase (quinone) of Corynebacterium efficiens (strain DSM 44549 / YS-314 / AJ 12310 / JCM 11189 / NBRC 100395).